We begin with the raw amino-acid sequence, 746 residues long: Actin filament-associated protein 1-like 1 (746 aa).

The interval 88–206 (EDQKKEPEAN…RLTHQWPSEE (119 aa)) is disordered. Polar residues predominate over residues 98–107 (HTVTKPSKTD). The span at 108 to 119 (SPPPLPNTPPPE) shows a compositional bias: pro residues. Positions 139–148 (SRSSSSPPNS) are enriched in low complexity. The 97-residue stretch at 214-310 (DCHICAFLLR…WLHVVRDVTG (97 aa)) folds into the PH 1 domain. The disordered stretch occupies residues 336 to 371 (EKQTSDSDSMPSGESARDIRENGKPKRGALSELTGT). The span at 350–359 (SARDIRENGK) shows a compositional bias: basic and acidic residues. Residues 406 to 497 (RCGYVGVLVN…WLGVLLAETG (92 aa)) form the PH 2 domain. Disordered stretches follow at residues 539–596 (EVPF…TRAQ) and 723–746 (PSIY…KKGT). The span at 562-575 (SFSSSDTGKPSPQI) shows a compositional bias: polar residues. Residues 591 to 682 (GKTRAQEDAR…VKENLKKSLA (92 aa)) are a coiled coil. Residues 736-746 (KAKEWESKKGT) show a composition bias toward basic and acidic residues.

It is found in the cytoplasm. The protein localises to the cell projection. Its subcellular location is the podosome. It localises to the invadopodium. The protein resides in the cytoskeleton. It is found in the stress fiber. Functionally, may be involved in podosome and invadosome formation. The chain is Actin filament-associated protein 1-like 1 (afap1l1) from Danio rerio (Zebrafish).